A 664-amino-acid polypeptide reads, in one-letter code: Fructose-1,6-bisphosphatase class 3 (664 aa).

The protein belongs to the FBPase class 3 family. It depends on Mn(2+) as a cofactor.

The enzyme catalyses beta-D-fructose 1,6-bisphosphate + H2O = beta-D-fructose 6-phosphate + phosphate. The protein operates within carbohydrate biosynthesis; gluconeogenesis. This chain is Fructose-1,6-bisphosphatase class 3, found in Bacteroides thetaiotaomicron (strain ATCC 29148 / DSM 2079 / JCM 5827 / CCUG 10774 / NCTC 10582 / VPI-5482 / E50).